Reading from the N-terminus, the 501-residue chain is Nuclear receptor-binding protein 2 (501 aa).

Positions 1–33 (MAAPEPAPRRAREREREREDESEDESDILEESP) are disordered. Over residues 7 to 19 (APRRARERERERE) the composition is skewed to basic and acidic residues. Over residues 20-30 (DESEDESDILE) the composition is skewed to acidic residues. One can recognise a Protein kinase domain in the interval 38–306 (QKRREQVNQG…AHSLLFHRVL (269 aa)). Phosphothreonine occurs at positions 409 and 411.

The protein belongs to the protein kinase superfamily. Ser/Thr protein kinase family.

Its subcellular location is the cytoplasm. In terms of biological role, may regulate apoptosis of neural progenitor cells during their differentiation. In Homo sapiens (Human), this protein is Nuclear receptor-binding protein 2.